Consider the following 379-residue polypeptide: Probable malonyl-CoA-acyl carrier protein transacylase, mitochondrial (379 aa).

The transit peptide at 1-23 (MLAARRLLRSPRITGALSWSRWS) directs the protein to the mitochondrion. Catalysis depends on residues Ser158 and His275.

It belongs to the type II malonyltransferase family.

It is found in the mitochondrion. The catalysed reaction is holo-[ACP] + malonyl-CoA = malonyl-[ACP] + CoA. It participates in lipid metabolism; fatty acid biosynthesis. In terms of biological role, catalyzes the transfer of a malonyl moiety from malonyl-CoA to the free thiol group of the phosphopantetheine arm of the ACP protein. This suggests the existence of the biosynthesis of fatty acids in mitochondria. This is Probable malonyl-CoA-acyl carrier protein transacylase, mitochondrial from Drosophila melanogaster (Fruit fly).